A 156-amino-acid chain; its full sequence is Lipoprotein signal peptidase (156 aa).

3 helical membrane-spanning segments follow: residues 37-57 (VIPG…FGFL), 68-88 (FFVV…KSAE), and 95-115 (ILGL…RILY). Active-site residues include Asp-120 and Asp-138. The chain crosses the membrane as a helical span at residues 133-153 (AFNVADIAICLGAFAMIVSFY).

This sequence belongs to the peptidase A8 family.

The protein localises to the cell inner membrane. It carries out the reaction Release of signal peptides from bacterial membrane prolipoproteins. Hydrolyzes -Xaa-Yaa-Zaa-|-(S,diacylglyceryl)Cys-, in which Xaa is hydrophobic (preferably Leu), and Yaa (Ala or Ser) and Zaa (Gly or Ala) have small, neutral side chains.. Its pathway is protein modification; lipoprotein biosynthesis (signal peptide cleavage). In terms of biological role, this protein specifically catalyzes the removal of signal peptides from prolipoproteins. This Maridesulfovibrio salexigens (strain ATCC 14822 / DSM 2638 / NCIMB 8403 / VKM B-1763) (Desulfovibrio salexigens) protein is Lipoprotein signal peptidase.